Reading from the N-terminus, the 208-residue chain is Probable GTP-binding protein EngB (208 aa).

Residues 23–205 form the EngB-type G domain; it reads LTSEMVVLGR…RQTLLKYLLT (183 aa). GTP-binding positions include 31 to 38, 57 to 61, 84 to 87, 154 to 157, and 182 to 184; these read GRSNVGKS, GKTRL, DLPG, TKFD, and FNA. Ser38 and Thr59 together coordinate Mg(2+).

The protein belongs to the TRAFAC class TrmE-Era-EngA-EngB-Septin-like GTPase superfamily. EngB GTPase family. Requires Mg(2+) as cofactor.

Necessary for normal cell division and for the maintenance of normal septation. This Helicobacter acinonychis (strain Sheeba) protein is Probable GTP-binding protein EngB.